A 583-amino-acid chain; its full sequence is Sensor protein SrrB (583 aa).

Residues Met1–Lys11 lie on the Cytoplasmic side of the membrane. A helical membrane pass occupies residues Leu12–Ile32. Residues Thr33–Thr174 lie on the Extracellular side of the membrane. A helical membrane pass occupies residues Ile175–Leu195. The Cytoplasmic segment spans residues Ser196–Glu583. One can recognise an HAMP domain in the interval Ser197–Asp249. A Histidine kinase domain is found at Asn366–Glu583. His369 bears the Phosphohistidine; by autocatalysis mark.

Its subcellular location is the cell membrane. It catalyses the reaction ATP + protein L-histidine = ADP + protein N-phospho-L-histidine.. In terms of biological role, member of the two-component regulatory system SrrA/SrrB, which is involved in the global regulation of staphylococcal virulence factors in response to environmental oxygen levels as well as biofilm formation. Also plays an essential role in host-derived nitric oxide resistance by regulating hmp/flavohemoglobin, an enzyme that detoxifies nitric oxide by converting it to nitrate. Functions as a sensor protein kinase which is autophosphorylated at a histidine residue and transfers its phosphate group to SrrA. In turn, SrrA binds to the upstream promoter regions of the target genes to positively and negatively regulate their expression. This chain is Sensor protein SrrB (srrB), found in Staphylococcus aureus (strain MW2).